A 242-amino-acid polypeptide reads, in one-letter code: 1-(5-phosphoribosyl)-5-[(5-phosphoribosylamino)methylideneamino] imidazole-4-carboxamide isomerase (242 aa).

The active-site Proton acceptor is Asp8. Asp129 acts as the Proton donor in catalysis.

This sequence belongs to the HisA/HisF family.

Its subcellular location is the cytoplasm. It carries out the reaction 1-(5-phospho-beta-D-ribosyl)-5-[(5-phospho-beta-D-ribosylamino)methylideneamino]imidazole-4-carboxamide = 5-[(5-phospho-1-deoxy-D-ribulos-1-ylimino)methylamino]-1-(5-phospho-beta-D-ribosyl)imidazole-4-carboxamide. The protein operates within amino-acid biosynthesis; L-histidine biosynthesis; L-histidine from 5-phospho-alpha-D-ribose 1-diphosphate: step 4/9. In Dictyoglomus thermophilum (strain ATCC 35947 / DSM 3960 / H-6-12), this protein is 1-(5-phosphoribosyl)-5-[(5-phosphoribosylamino)methylideneamino] imidazole-4-carboxamide isomerase.